A 146-amino-acid chain; its full sequence is Hemoglobin subunit beta (146 aa).

N-acetylvaline is present on valine 1. A Globin domain is found at 2–146 (QLSGEEKAAV…VANALAHKYH (145 aa)). Serine 44 is subject to Phosphoserine. N6-acetyllysine is present on lysine 59. Position 63 (histidine 63) interacts with heme b. Lysine 82 is subject to N6-acetyllysine. Heme b is bound at residue histidine 92. S-nitrosocysteine is present on cysteine 93. Lysine 144 is modified (N6-acetyllysine).

Belongs to the globin family. In terms of assembly, heterotetramer of two alpha chains and two beta chains. Red blood cells.

Functionally, involved in oxygen transport from the lung to the various peripheral tissues. This Equus hemionus kulan (Turkmenian kulan) protein is Hemoglobin subunit beta (HBB).